Here is a 948-residue protein sequence, read N- to C-terminus: Probable disease resistance protein At5g47260 (948 aa).

The stretch at Arg-20–Ile-57 forms a coiled coil. The 299-residue stretch at His-134 to Arg-432 folds into the NB-ARC domain. An ATP-binding site is contributed by Gly-176–Thr-183. LRR repeat units follow at residues Met-498–Ser-519, Glu-520–Trp-542, Gly-545–Leu-567, Leu-569–Lys-591, Ser-592–Leu-614, Asn-615–Gln-636, Ser-640–Gln-661, Ser-666–Asn-686, and Ser-690–Thr-711.

Belongs to the disease resistance NB-LRR family.

Functionally, potential disease resistance protein. This is Probable disease resistance protein At5g47260 from Arabidopsis thaliana (Mouse-ear cress).